The primary structure comprises 291 residues: Omega-amidase NIT3 (291 aa).

A CN hydrolase domain is found at 11-264 (IKVALVQLSG…EEIIYAELDP (254 aa)). At Thr-34 the chain carries Phosphothreonine. Residue Glu-53 is the Proton acceptor of the active site. Residue Lys-128 is the Proton donor of the active site. The active-site Nucleophile is the Cys-169.

This sequence belongs to the carbon-nitrogen hydrolase superfamily. NIT1/NIT2 family. Homodimer.

It carries out the reaction a monoamide of a dicarboxylate + H2O = a dicarboxylate + NH4(+). In terms of biological role, possesses omega-amidase activity. The role of omega-amidase is to remove potentially toxic intermediates by converting 2-oxoglutaramate and 2-oxosuccinamate to biologically useful 2-oxoglutarate and oxaloacetate, respectively. In Saccharomyces cerevisiae (strain ATCC 204508 / S288c) (Baker's yeast), this protein is Omega-amidase NIT3 (NIT3).